Consider the following 382-residue polypeptide: 1-deoxy-D-xylulose 5-phosphate reductoisomerase (382 aa).

The NADPH site is built by T10, G11, S12, I13, G36, and N122. K123 is a binding site for 1-deoxy-D-xylulose 5-phosphate. E124 provides a ligand contact to NADPH. Mn(2+) is bound at residue D148. 1-deoxy-D-xylulose 5-phosphate-binding residues include S149, E150, S174, and H197. E150 serves as a coordination point for Mn(2+). NADPH is bound at residue G203. Positions 210, 215, 216, and 219 each coordinate 1-deoxy-D-xylulose 5-phosphate. Residue E219 coordinates Mn(2+).

Belongs to the DXR family. Mg(2+) serves as cofactor. Requires Mn(2+) as cofactor.

The catalysed reaction is 2-C-methyl-D-erythritol 4-phosphate + NADP(+) = 1-deoxy-D-xylulose 5-phosphate + NADPH + H(+). The protein operates within isoprenoid biosynthesis; isopentenyl diphosphate biosynthesis via DXP pathway; isopentenyl diphosphate from 1-deoxy-D-xylulose 5-phosphate: step 1/6. Its function is as follows. Catalyzes the NADPH-dependent rearrangement and reduction of 1-deoxy-D-xylulose-5-phosphate (DXP) to 2-C-methyl-D-erythritol 4-phosphate (MEP). The protein is 1-deoxy-D-xylulose 5-phosphate reductoisomerase of Chlorobaculum tepidum (strain ATCC 49652 / DSM 12025 / NBRC 103806 / TLS) (Chlorobium tepidum).